The chain runs to 353 residues: Protein RecA (353 aa).

68 to 75 provides a ligand contact to ATP; that stretch reads GPESSGKT.

This sequence belongs to the RecA family.

It localises to the cytoplasm. In terms of biological role, can catalyze the hydrolysis of ATP in the presence of single-stranded DNA, the ATP-dependent uptake of single-stranded DNA by duplex DNA, and the ATP-dependent hybridization of homologous single-stranded DNAs. It interacts with LexA causing its activation and leading to its autocatalytic cleavage. This Roseiflexus castenholzii (strain DSM 13941 / HLO8) protein is Protein RecA.